Reading from the N-terminus, the 427-residue chain is Dihydroorotase (427 aa).

His-58 and His-60 together coordinate Zn(2+). Substrate-binding positions include 60-62 (HYR) and Asn-92. Residues Asp-150, His-177, and His-230 each coordinate Zn(2+). Substrate is bound at residue Asn-276. Asp-303 lines the Zn(2+) pocket. Asp-303 is an active-site residue. Substrate is bound by residues His-307 and 321–322 (FG).

This sequence belongs to the metallo-dependent hydrolases superfamily. DHOase family. Class I DHOase subfamily. Zn(2+) serves as cofactor.

The catalysed reaction is (S)-dihydroorotate + H2O = N-carbamoyl-L-aspartate + H(+). Its pathway is pyrimidine metabolism; UMP biosynthesis via de novo pathway; (S)-dihydroorotate from bicarbonate: step 3/3. Its function is as follows. Catalyzes the reversible cyclization of carbamoyl aspartate to dihydroorotate. In Lactobacillus leichmannii, this protein is Dihydroorotase.